Reading from the N-terminus, the 216-residue chain is 3-keto-L-gulonate-6-phosphate decarboxylase UlaD (216 aa).

Aspartate 11 is a binding site for substrate. Residues glutamate 33 and aspartate 62 each coordinate Mg(2+). Arginine 192 lines the substrate pocket.

Belongs to the HPS/KGPDC family. KGPDC subfamily. Homodimer. It depends on Mg(2+) as a cofactor.

It carries out the reaction 3-dehydro-L-gulonate 6-phosphate + H(+) = L-xylulose 5-phosphate + CO2. Its pathway is cofactor degradation; L-ascorbate degradation; D-xylulose 5-phosphate from L-ascorbate: step 2/4. Catalyzes the decarboxylation of 3-keto-L-gulonate-6-P into L-xylulose-5-P. Is involved in the anaerobic L-ascorbate utilization. The protein is 3-keto-L-gulonate-6-phosphate decarboxylase UlaD of Escherichia coli O17:K52:H18 (strain UMN026 / ExPEC).